The following is a 358-amino-acid chain: Glutamine synthetase (358 aa).

Residues 26 to 105 (ILAEYIWIDG…VLAECWNADG (80 aa)) enclose the GS beta-grasp domain. The GS catalytic domain maps to 112 to 358 (HRHECAKIME…IMMETICGGI (247 aa)).

It belongs to the glutamine synthetase family. In terms of assembly, homooctamer.

It localises to the cytoplasm. The enzyme catalyses L-glutamate + NH4(+) + ATP = L-glutamine + ADP + phosphate + H(+). This chain is Glutamine synthetase (GLN1), found in Tuber borchii (White truffle).